Consider the following 210-residue polypeptide: Ion-translocating oxidoreductase complex subunit G (210 aa).

Residues 9–29 (GVTLAVFAAITTGLTAVINAV) form a helical membrane-spanning segment. Thr-175 is modified (FMN phosphoryl threonine).

The protein belongs to the RnfG family. As to quaternary structure, the complex is composed of six subunits: RnfA, RnfB, RnfC, RnfD, RnfE and RnfG. It depends on FMN as a cofactor.

It is found in the cell inner membrane. In terms of biological role, part of a membrane-bound complex that couples electron transfer with translocation of ions across the membrane. This is Ion-translocating oxidoreductase complex subunit G from Erwinia tasmaniensis (strain DSM 17950 / CFBP 7177 / CIP 109463 / NCPPB 4357 / Et1/99).